Consider the following 149-residue polypeptide: Deoxyuridine 5'-triphosphate nucleotidohydrolase (149 aa).

Residues 66–68 (RSG), Asn-79, 83–85 (TID), and Lys-93 contribute to the substrate site.

It belongs to the dUTPase family. Mg(2+) serves as cofactor.

The enzyme catalyses dUTP + H2O = dUMP + diphosphate + H(+). It participates in pyrimidine metabolism; dUMP biosynthesis; dUMP from dCTP (dUTP route): step 2/2. Its function is as follows. This enzyme is involved in nucleotide metabolism: it produces dUMP, the immediate precursor of thymidine nucleotides and it decreases the intracellular concentration of dUTP so that uracil cannot be incorporated into DNA. The sequence is that of Deoxyuridine 5'-triphosphate nucleotidohydrolase from Corynebacterium glutamicum (strain ATCC 13032 / DSM 20300 / JCM 1318 / BCRC 11384 / CCUG 27702 / LMG 3730 / NBRC 12168 / NCIMB 10025 / NRRL B-2784 / 534).